The following is a 116-amino-acid chain: Putative pterin-4-alpha-carbinolamine dehydratase (116 aa).

Belongs to the pterin-4-alpha-carbinolamine dehydratase family.

The enzyme catalyses (4aS,6R)-4a-hydroxy-L-erythro-5,6,7,8-tetrahydrobiopterin = (6R)-L-erythro-6,7-dihydrobiopterin + H2O. The protein is Putative pterin-4-alpha-carbinolamine dehydratase of Microcystis aeruginosa (strain NIES-843 / IAM M-2473).